A 1589-amino-acid polypeptide reads, in one-letter code: MAAPTTIKILGRDSIVADFGIWKRHVADDLLTNCSSSTYILISDTTLTPLYVPSFQAAFENAASGLTPKPRLLTYAIPPGELSKSRQTKADIEDWMLSRQPPCGRDTVIIALGGGVIGDLIGYVAATYMRGVRFVQVPTTLLAMVDSSIGGKTAIDTPHGKNLIGAIWQPQKIYLDMEFLNTLPEREFINGMAEVIKTAAISSEEDFAALEKNADAILSAVKSENTPERPRFGGIQEILKLTILASARFKADVVSKDEREGGLRNLLNFGHSIGHAIEGILAPQILHGECVAIGMVKEAELARHLGLLKNVAVPRLVKCLASYGLPTSLKDSRIRRLSAGKHCSVDQLLAFMAVDKKNAGPKKKVVLLSAIGRTHEQQASVVSNEDIKIVLAPSIEVSPGVPKSLQVTCTPPGSKSISNRALVLAALGSGTCRIKNLLHSDDTEVMLNALERLGAATFSWEEEGEVLVVHGNGGTLKASPEELYLGNAGTASRFLTTVATLANNGTVSSTVLTGNARMKQRPIGALVDSLRANGAGVEYLETNGCLPLKIDASGGFAGGEISLAAKISSQYVSSLLMCAPYAKEPVTLKLVGGKPISQQYIDMTTAMMRSFGIDVKRSTTEEHTYHIPQGKYVNPAEYIIESDASSATYPLAVAAITGTTCTIPNIGSKSLQGDARFAVDVLRPMGCEVSQSEYSTTVTAPKDGVLKPLPNVDMEPMTDAFLTASVLAAVATGSPNRTTRIFGIANQRVKECNRIRAMKDELAKFGVICREHDDGLEIDGIDRSTLLQPPHGVHCYDDHRVAMSFSVLSLTAPKPTLILEKECVGKTWPGWWDTLAQLFKAKLEGVELKSSTKQKAEKPAASIFIIGMRGAGKTTSGLWAAKALKRPFIDLDVELESTIGKTIPEIIKERGWEGFREAELALLQKVIREKPTGYVFACGGGIVETQEGRDLLVQYHKANGNVLLLMRDIKEVMDFLKIDKTRPAYVEDMMGVWLRRKPWYQQCSNFQFYSQQSTQDEMGRALESFSRFLRVITGEVDHLSLLKKKPQSFFVSLTLPDLRPSAEILGDVTLGSDAVELRVDLLVDPSSANDIPSVDYVAEQISMLRSRVSLPLVFTIRTKSQGGRFPDDAHDAALDLYRLAVRMGSEFVDLEVTFPEHILRAVTEMKGFSKIIASHHDVSGSLSWANGSWGQFYNKALQYGDIIKLVGVAKCLDDNIALRKFKTWAQDAHEIPVIAINMGEKGRLSRILNGFMTPVSHPKLPFKAAPGQLSAQDIRKGLSLMGEIEPRKFAIFGKPVSASRSPAMHNALFAQVGLPHAYSRLETDNVEDVREFIHAPDFGGASVTIPLKLDIMPLLDEISPEAQVIGAVNTIVPIPRGPGDMTGYPRLIGYNTDWQGMVRCLRHGKAISPSFADTAVPGLVIGGGGTARAAIHALYSMSYSPIYLIGRSEAKVAEMASTFPEKYSVQVLKDATSLENLPMVAIGTIPGDRPIDPSMREVLCRLFENAARVDSELSAKGEVPAKRVLLEMAYKPDITPLSQLASDSGWSTIPGLEALVGQGVHQFELWTGITPVYQDARAAVMNPGTDNRG.

The tract at residues M1–N384 is 3-dehydroquinate synthase. Residues D44–T46, E81–K84, G114–V116, and D119 each bind NAD(+). R130 is a binding site for 7-phospho-2-dehydro-3-deoxy-D-arabino-heptonate. T139–T140 serves as a coordination point for NAD(+). 7-phospho-2-dehydro-3-deoxy-D-arabino-heptonate contacts are provided by D146 and K152. K161 provides a ligand contact to NAD(+). N162 is a 7-phospho-2-dehydro-3-deoxy-D-arabino-heptonate binding site. NAD(+) is bound by residues F179–T182 and N190. E194 is a Zn(2+) binding site. 7-phospho-2-dehydro-3-deoxy-D-arabino-heptonate contacts are provided by residues E194–K197 and K250. The Proton acceptor; for 3-dehydroquinate synthase activity role is filled by E260. Residues R264 to N268 and H271 contribute to the 7-phospho-2-dehydro-3-deoxy-D-arabino-heptonate site. Residue H271 coordinates Zn(2+). The active-site Proton acceptor; for 3-dehydroquinate synthase activity is the H275. H287 and K356 together coordinate 7-phospho-2-dehydro-3-deoxy-D-arabino-heptonate. H287 is a binding site for Zn(2+). Positions V397–A841 are EPSP synthase. The active-site For EPSP synthase activity is C823. The shikimate kinase stretch occupies residues A861–S1052. Residue G867–T874 participates in ATP binding. A 3-dehydroquinase region spans residues L1053–D1273. Residue H1176 is the Proton acceptor; for 3-dehydroquinate dehydratase activity of the active site. K1204 serves as the catalytic Schiff-base intermediate with substrate; for 3-dehydroquinate dehydratase activity. The tract at residues P1286–G1589 is shikimate dehydrogenase.

This sequence in the N-terminal section; belongs to the sugar phosphate cyclases superfamily. Dehydroquinate synthase family. It in the 2nd section; belongs to the EPSP synthase family. The protein in the 3rd section; belongs to the shikimate kinase family. In the 4th section; belongs to the type-I 3-dehydroquinase family. This sequence in the C-terminal section; belongs to the shikimate dehydrogenase family. As to quaternary structure, homodimer. Zn(2+) is required as a cofactor.

Its subcellular location is the cytoplasm. It carries out the reaction 7-phospho-2-dehydro-3-deoxy-D-arabino-heptonate = 3-dehydroquinate + phosphate. The catalysed reaction is 3-dehydroquinate = 3-dehydroshikimate + H2O. It catalyses the reaction shikimate + NADP(+) = 3-dehydroshikimate + NADPH + H(+). The enzyme catalyses shikimate + ATP = 3-phosphoshikimate + ADP + H(+). It carries out the reaction 3-phosphoshikimate + phosphoenolpyruvate = 5-O-(1-carboxyvinyl)-3-phosphoshikimate + phosphate. The protein operates within metabolic intermediate biosynthesis; chorismate biosynthesis; chorismate from D-erythrose 4-phosphate and phosphoenolpyruvate: step 2/7. Its pathway is metabolic intermediate biosynthesis; chorismate biosynthesis; chorismate from D-erythrose 4-phosphate and phosphoenolpyruvate: step 3/7. It participates in metabolic intermediate biosynthesis; chorismate biosynthesis; chorismate from D-erythrose 4-phosphate and phosphoenolpyruvate: step 4/7. It functions in the pathway metabolic intermediate biosynthesis; chorismate biosynthesis; chorismate from D-erythrose 4-phosphate and phosphoenolpyruvate: step 5/7. The protein operates within metabolic intermediate biosynthesis; chorismate biosynthesis; chorismate from D-erythrose 4-phosphate and phosphoenolpyruvate: step 6/7. Functionally, the AROM polypeptide catalyzes 5 consecutive enzymatic reactions in prechorismate polyaromatic amino acid biosynthesis. This chain is Pentafunctional AROM polypeptide, found in Coccidioides posadasii (strain C735) (Valley fever fungus).